A 742-amino-acid polypeptide reads, in one-letter code: Protein-lysine N-methyltransferase SMYD4 (742 aa).

Residue 110–112 coordinates S-adenosyl-L-methionine; that stretch reads RSA. One can recognise an SET domain in the interval 230–569; the sequence is SSLSLNFSTE…SGQEIFHCYG (340 aa). Positions 295, 298, 308, 311, 317, 321, 330, and 334 each coordinate Zn(2+). The segment at 295-334 adopts an MYND-type zinc-finger fold; it reads CHHCLKQLLASIPCCGCSYAKYCSQNCADVAWEQYHRTEC. Residues N418, 534–535, and Y568 each bind S-adenosyl-L-methionine; that span reads NH.

It belongs to the class V-like SAM-binding methyltransferase superfamily.

It localises to the nucleus. It is found in the cytoplasm. It catalyses the reaction L-lysyl-[protein] + S-adenosyl-L-methionine = N(6)-methyl-L-lysyl-[protein] + S-adenosyl-L-homocysteine + H(+). Its function is as follows. Protein-lysine N-methyltransferase. Monomethylates PRMT5, modulating its transcriptional activity. May also act as a histone methyltransferase. Plays a critical role in cardiac development. Acts as a key epigenetic regulator of gene expression during cardiac development via its dual activities as a methyltransferase and negative regulator of HDAC1. This is Protein-lysine N-methyltransferase SMYD4 (SMYD4) from Gallus gallus (Chicken).